Reading from the N-terminus, the 1247-residue chain is E3 ubiquitin-protein ligase hecw-1 (1247 aa).

One can recognise a WW 1 domain in the interval 602–635 (TPPESHWKTYLDAKKRKFYVNHVTKETRWTKPDT). The segment at 633–659 (PDTLNNNHIEPETPVHKRLSDRSASPR) is disordered. Over residues 641-653 (IEPETPVHKRLSD) the composition is skewed to basic and acidic residues. In terms of domain architecture, WW 2 spans 745 to 777 (QPLPSGWECITMNNRTVFLNHANKETSFYDPRI). One can recognise an HECT domain in the interval 914–1247 (DPFVLKKSRL…IVNGMSYSIE (334 aa)). C1215 (glycyl thioester intermediate) is an active-site residue.

As to expression, expressed in the nervous system throughout the body. In the anterior ganglion, expression is limited to the two lateral outer labial neurons OLLL and OLLR.

Its subcellular location is the cytoplasm. The enzyme catalyses S-ubiquitinyl-[E2 ubiquitin-conjugating enzyme]-L-cysteine + [acceptor protein]-L-lysine = [E2 ubiquitin-conjugating enzyme]-L-cysteine + N(6)-ubiquitinyl-[acceptor protein]-L-lysine.. The protein operates within protein modification; protein ubiquitination. In terms of biological role, E3 ubiquitin-protein ligase. Functions in the OLL neurons in the anterior ganglion to inhibit avoidance to microbial pathogens such as P.aeruginosa although worms do display avoidance behavior, vacating a P.aeruginosa lawn within 24 hours. Likely to act by inhibiting the neuropeptide receptor npr-1. This chain is E3 ubiquitin-protein ligase hecw-1, found in Caenorhabditis elegans.